A 1590-amino-acid chain; its full sequence is Pentafunctional AROM polypeptide (1590 aa).

Positions 1–387 (MGSTTFENPT…YEPKASVVED (387 aa)) are 3-dehydroquinate synthase. NAD(+) is bound by residues 49-51 (DTN), 86-89 (ENSK), 117-119 (GGV), and Asp-122. Arg-133 serves as a coordination point for 7-phospho-2-dehydro-3-deoxy-D-arabino-heptonate. Residue 142–143 (TT) participates in NAD(+) binding. 7-phospho-2-dehydro-3-deoxy-D-arabino-heptonate is bound by residues Asp-149 and Lys-155. An NAD(+)-binding site is contributed by Lys-164. 7-phospho-2-dehydro-3-deoxy-D-arabino-heptonate is bound at residue Asn-165. NAD(+)-binding positions include 182–185 (FLET) and Asn-193. Glu-197 provides a ligand contact to Zn(2+). 7-phospho-2-dehydro-3-deoxy-D-arabino-heptonate is bound by residues 197–200 (EVVK) and Lys-253. Glu-263 (proton acceptor; for 3-dehydroquinate synthase activity) is an active-site residue. 7-phospho-2-dehydro-3-deoxy-D-arabino-heptonate-binding positions include 267-271 (RNILN) and His-274. His-274 lines the Zn(2+) pocket. His-278 (proton acceptor; for 3-dehydroquinate synthase activity) is an active-site residue. Positions 290 and 359 each coordinate 7-phospho-2-dehydro-3-deoxy-D-arabino-heptonate. His-290 lines the Zn(2+) pocket. The tract at residues 400-841 (VRPSVPETLN…WDILSKSFQV (442 aa)) is EPSP synthase. Cys-823 functions as the For EPSP synthase activity in the catalytic mechanism. The segment at 863-1055 (DKSIFIIGMR…RNKPQSFFVS (193 aa)) is shikimate kinase. Residue 870 to 877 (GMRGAGKT) participates in ATP binding. Residues 1056–1276 (LTMPDISGAA…AAPGQLSAAE (221 aa)) form a 3-dehydroquinase region. His-1179 serves as the catalytic Proton acceptor; for 3-dehydroquinate dehydratase activity. Lys-1207 acts as the Schiff-base intermediate with substrate; for 3-dehydroquinate dehydratase activity in catalysis. The interval 1289–1590 (PKSFYLFGTP…KMDKHPTFVC (302 aa)) is shikimate dehydrogenase.

The protein in the N-terminal section; belongs to the sugar phosphate cyclases superfamily. Dehydroquinate synthase family. In the 2nd section; belongs to the EPSP synthase family. This sequence in the 3rd section; belongs to the shikimate kinase family. It in the 4th section; belongs to the type-I 3-dehydroquinase family. The protein in the C-terminal section; belongs to the shikimate dehydrogenase family. In terms of assembly, homodimer. Zn(2+) is required as a cofactor.

The protein resides in the cytoplasm. The catalysed reaction is 7-phospho-2-dehydro-3-deoxy-D-arabino-heptonate = 3-dehydroquinate + phosphate. It carries out the reaction 3-dehydroquinate = 3-dehydroshikimate + H2O. The enzyme catalyses shikimate + NADP(+) = 3-dehydroshikimate + NADPH + H(+). It catalyses the reaction shikimate + ATP = 3-phosphoshikimate + ADP + H(+). The catalysed reaction is 3-phosphoshikimate + phosphoenolpyruvate = 5-O-(1-carboxyvinyl)-3-phosphoshikimate + phosphate. Its pathway is metabolic intermediate biosynthesis; chorismate biosynthesis; chorismate from D-erythrose 4-phosphate and phosphoenolpyruvate: step 2/7. It functions in the pathway metabolic intermediate biosynthesis; chorismate biosynthesis; chorismate from D-erythrose 4-phosphate and phosphoenolpyruvate: step 3/7. It participates in metabolic intermediate biosynthesis; chorismate biosynthesis; chorismate from D-erythrose 4-phosphate and phosphoenolpyruvate: step 4/7. The protein operates within metabolic intermediate biosynthesis; chorismate biosynthesis; chorismate from D-erythrose 4-phosphate and phosphoenolpyruvate: step 5/7. Its pathway is metabolic intermediate biosynthesis; chorismate biosynthesis; chorismate from D-erythrose 4-phosphate and phosphoenolpyruvate: step 6/7. In terms of biological role, the AROM polypeptide catalyzes 5 consecutive enzymatic reactions in prechorismate polyaromatic amino acid biosynthesis. The chain is Pentafunctional AROM polypeptide from Sclerotinia sclerotiorum (White mold).